The chain runs to 148 residues: Lysozyme C (148 aa).

Residues 1–18 form the signal peptide; that stretch reads MKAPLLLGLLLLSVTVQG. Positions 19-148 constitute a C-type lysozyme domain; it reads KVFERCDLAR…VSQYVRNCGV (130 aa). Cystine bridges form between C24–C146, C48–C134, C83–C99, and C95–C113. Residues E53 and D71 contribute to the active site.

This sequence belongs to the glycosyl hydrolase 22 family. As to quaternary structure, monomer.

It localises to the secreted. It catalyses the reaction Hydrolysis of (1-&gt;4)-beta-linkages between N-acetylmuramic acid and N-acetyl-D-glucosamine residues in a peptidoglycan and between N-acetyl-D-glucosamine residues in chitodextrins.. Lysozymes have primarily a bacteriolytic function; those in tissues and body fluids are associated with the monocyte-macrophage system and enhance the activity of immunoagents. This chain is Lysozyme C (LYZ), found in Leptonychotes weddellii (Weddell seal).